A 338-amino-acid polypeptide reads, in one-letter code: Acyl-CoA Delta(11) desaturase (338 aa).

Helical transmembrane passes span 33–53 (IVYF…YGLY) and 61–81 (WATV…VTAG). Residues 83 to 88 (HRLWSH) carry the Histidine box-1 motif. A helical transmembrane segment spans residues 97 to 117 (LQILLMVMNSLAFQNTVIDWV). The Histidine box-2 motif lies at 120 to 124 (HRLHH). 2 helical membrane passes run 181–201 (AIPF…VYGW) and 212–234 (AMLR…HIYG). The Histidine box-3 motif lies at 260–264 (HNYHH). The tract at residues 318-338 (TNLWGLEDVDTPEDLKNTKGE) is disordered.

It belongs to the fatty acid desaturase type 1 family. Requires Fe cation as cofactor. As to expression, detected in the pheromone gland.

It is found in the membrane. The enzyme catalyses an 11,12-saturated fatty acyl-CoA + 2 Fe(II)-[cytochrome b5] + O2 + 2 H(+) = an (11Z)-Delta(11)-fatty acyl-CoA + 2 Fe(III)-[cytochrome b5] + 2 H2O. Its function is as follows. Catalyzes the formation of delta(11) fatty acyl precursors in the pheromone gland, and has high activity towards palmitic acid and stearic acid. In Spodoptera littoralis (Egyptian cotton leafworm), this protein is Acyl-CoA Delta(11) desaturase.